A 300-amino-acid polypeptide reads, in one-letter code: Probable acetyltransferase Rv3034c (300 aa).

An N-terminal signal peptide occupies residues 1 to 25; the sequence is MNVLSLGSSSGVVWGRVPITAPAGA.

Belongs to the transferase hexapeptide repeat family.

Its function is as follows. May be involved in the biosynthesis of 6-O-methylglucosyl-containing lipopolysaccharides (MGLP). In terms of biological role, regulates host peroxisome homeostasis in response to intracellular redox levels to favor mycobacterial infection in macrophage. Induces the expression of host peroxisome biogenesis and proliferation factors as well as peroxisome associated enzymes. Inhibits the induction of host pexophagy mechanism by down-regulating the expression of pexophagy associated proteins and adapter molecules in infected macrophages. However, during increased oxidative stress conditions, it induces degradation of dysfunctional and damaged peroxisomes. Regulation of peroxisome biogenesis and degradation is dependent upon host p-mTORC1 mediated signaling pathway. The chain is Probable acetyltransferase Rv3034c from Mycobacterium tuberculosis (strain ATCC 25618 / H37Rv).